Here is a 361-residue protein sequence, read N- to C-terminus: Basic helix-loop-helix protein 79 (361 aa).

Positions 66 to 159 (APEASNGSGS…ASTVTAGQKT (94 aa)) are disordered. Positions 124–138 (GRPERARPGAKKKAE) are enriched in basic and acidic residues. The span at 146-157 (PATSASTVTAGQ) shows a compositional bias: polar residues. Positions 166-173 (ARRGQATD) match the Nuclear localization signal motif. The tract at residues 170 to 183 (QATDSHSLAERVRR) is basic motif; degenerate. Residues 170-220 (QATDSHSLAERVRRERISERMRYLQELVPGCNKVTGKAGMLDEIINYVQSL) enclose the bHLH domain. The interval 184-220 (ERISERMRYLQELVPGCNKVTGKAGMLDEIINYVQSL) is helix-loop-helix motif.

The protein belongs to the bHLH protein family. As to quaternary structure, homodimer. Interacts with IBH1.

Its subcellular location is the nucleus. In terms of biological role, together with BCL1, positive regulator of cell elongation at least partially through increased gibberellic acid (GA) biosynthesis. The chain is Basic helix-loop-helix protein 79 from Oryza sativa subsp. indica (Rice).